We begin with the raw amino-acid sequence, 367 residues long: Anthranilate phosphoribosyltransferase (367 aa).

The segment covering 1 to 17 (MVLSSEASSAADHSAAA) has biased composition (low complexity). The disordered stretch occupies residues 1–22 (MVLSSEASSAADHSAAAPIPTS). 5-phospho-alpha-D-ribose 1-diphosphate contacts are provided by residues Gly104, 107-108 (GD), Thr112, 114-117 (NLST), 132-140 (KHGNRAASS), and Gly144. Residue Gly104 coordinates anthranilate. Ser116 provides a ligand contact to Mg(2+). Asn135 contributes to the anthranilate binding site. Anthranilate is bound at residue Arg190. Positions 248 and 249 each coordinate Mg(2+).

This sequence belongs to the anthranilate phosphoribosyltransferase family. Homodimer. Requires Mg(2+) as cofactor.

The enzyme catalyses N-(5-phospho-beta-D-ribosyl)anthranilate + diphosphate = 5-phospho-alpha-D-ribose 1-diphosphate + anthranilate. The protein operates within amino-acid biosynthesis; L-tryptophan biosynthesis; L-tryptophan from chorismate: step 2/5. Functionally, catalyzes the transfer of the phosphoribosyl group of 5-phosphorylribose-1-pyrophosphate (PRPP) to anthranilate to yield N-(5'-phosphoribosyl)-anthranilate (PRA). This chain is Anthranilate phosphoribosyltransferase, found in Mycobacterium ulcerans (strain Agy99).